A 335-amino-acid polypeptide reads, in one-letter code: 2,4-dienoyl-CoA reductase [(3E)-enoyl-CoA-producing], mitochondrial (335 aa).

A mitochondrion-targeting transit peptide spans 1 to 34; sequence MKLPARVFFTLGSRLPCGLAPRRFFSYGTKILYQ. N6-acetyllysine; alternate is present on residues Lys-42 and Lys-49. Residues Lys-42 and Lys-49 each carry the N6-succinyllysine; alternate modification. An NADP(+)-binding site is contributed by 66–71; the sequence is GGGTGL. Thr-69 carries the post-translational modification Phosphothreonine. An N6-succinyllysine modification is found at Lys-73. Arg-91 contributes to the NADP(+) binding site. Position 91 (Arg-91) interacts with substrate. N6-acetyllysine; alternate is present on Lys-97. Lys-97 carries the N6-succinyllysine; alternate modification. An NADP(+)-binding site is contributed by Asp-117. Substrate-binding residues include Arg-119, Phe-149, and Ser-157. Tyr-199 functions as the Proton acceptor in the catalytic mechanism. Lys-214 lines the NADP(+) pocket. Position 230 is an N6-acetyllysine (Lys-230). 240 to 243 lines the NADP(+) pocket; the sequence is PGPI. An N6-acetyllysine; alternate modification is found at Lys-244. Residue Lys-244 is modified to N6-succinyllysine; alternate. Residue Arg-251 participates in substrate binding. An N6-acetyllysine; alternate mark is found at Lys-260 and Lys-319. An N6-succinyllysine; alternate mark is found at Lys-260 and Lys-319.

Belongs to the short-chain dehydrogenases/reductases (SDR) family. 2,4-dienoyl-CoA reductase subfamily. In terms of assembly, homotetramer. As to expression, heart = liver = pancreas &gt; kidney &gt;&gt; skeletal muscle = lung.

The protein localises to the mitochondrion. It catalyses the reaction a (2E,4E)-dienoyl-CoA + NADPH + H(+) = a 4,5-saturated-(3E)-enoyl-CoA + NADP(+). The catalysed reaction is a (2E,4Z)-dienoyl-CoA + NADPH + H(+) = a 4,5-saturated-(3E)-enoyl-CoA + NADP(+). It carries out the reaction (2E,4E)-hexadienoyl-CoA + NADPH + H(+) = (3E)-hexenoyl-CoA + NADP(+). Auxiliary enzyme of beta-oxidation. It participates in the metabolism of unsaturated fatty enoyl-CoA esters having double bonds in both even- and odd-numbered positions in mitochondria. Catalyzes the NADP-dependent reduction of 2,4-dienoyl-CoA to yield trans-3-enoyl-CoA. The chain is 2,4-dienoyl-CoA reductase [(3E)-enoyl-CoA-producing], mitochondrial (DECR1) from Homo sapiens (Human).